Reading from the N-terminus, the 622-residue chain is Microtubule-associated protein 70-1 (622 aa).

Residues 1 to 27 are disordered; it reads MSDVSADGGFLSAEQATTPVAIPTPYP. A coiled-coil region spans residues 66-365; sequence DPVKVELNRL…LAISDRAAKS (300 aa). Residues 250–483 form a required for targeting to microtubules region; sequence ILDRMHRQKV…YSFNKACDET (234 aa). Disordered regions lie at residues 388-512 and 579-622; these read SSIS…TEDN and AAMR…RSTQ. Polar residues-rich tracts occupy residues 400–425 and 432–453; these read SMSNGPSRRQSIGGSDNLQKFASNGF and MRNSFTSNSTSVLKNAKGTSKS. Composition is skewed to basic and acidic residues over residues 479-501 and 579-591; these read ACDETKESESPNTWKEDSEEKPP and AAMRVDKDQDNRA. Residues 541-590 are a coiled coil; that stretch reads DKDDAIEMLAKKVETLTKAMEVEAKKMRREVAAMEKEVAAMRVDKDQDNR. Over residues 594–605 the composition is skewed to polar residues; sequence SSNTKPSSNTAQ.

This sequence belongs to the MAP70 family. As to quaternary structure, interacts with MAP70.5 and itself.

The protein resides in the cytoplasm. It localises to the cytoskeleton. Its subcellular location is the phragmoplast. It is found in the spindle. In terms of biological role, plant-specific protein that interact with microtubules. In association with MAP70.5, is essential for the normal banding pattern of secondary cell wall and for the proper development of xylem tracheary elements and wood formation. This chain is Microtubule-associated protein 70-1 (MAP70.1), found in Arabidopsis thaliana (Mouse-ear cress).